We begin with the raw amino-acid sequence, 173 residues long: Transcriptional repressor NrdR (173 aa).

A zinc finger spans residues 3-34 (CPYCGSLDTQVKDSRPTEDNTAIRRRRVCPDC). Residues 49–139 (LMVVKRSGRR…VYRNFREARD (91 aa)) enclose the ATP-cone domain.

The protein belongs to the NrdR family. Zn(2+) is required as a cofactor.

In terms of biological role, negatively regulates transcription of bacterial ribonucleotide reductase nrd genes and operons by binding to NrdR-boxes. The chain is Transcriptional repressor NrdR from Azorhizobium caulinodans (strain ATCC 43989 / DSM 5975 / JCM 20966 / LMG 6465 / NBRC 14845 / NCIMB 13405 / ORS 571).